Here is a 465-residue protein sequence, read N- to C-terminus: Neutrophil collagenase (465 aa).

The N-terminal stretch at 1–20 (MFRLKTLPLLIFLHTQLANA) is a signal peptide. The propeptide at 21 to 100 (FPVPEHLEEK…CGVPDSGDFL (80 aa)) is activation peptide. N-linked (GlcNAc...) asparagine glycosylation is present at asparagine 55. A Cysteine switch motif is present at residues 89 to 96 (PRCGVPDS). Cysteine 91 contacts Zn(2+). Asparagine 112 is a glycosylation site (N-linked (GlcNAc...) asparagine). A Ca(2+)-binding site is contributed by aspartate 157. Zn(2+) contacts are provided by histidine 167 and aspartate 169. Residues aspartate 174, glycine 175, asparagine 177, and isoleucine 179 each coordinate Ca(2+). Histidine 182 lines the Zn(2+) pocket. The Ca(2+) site is built by glycine 189, glycine 191, and aspartate 193. Position 195 (histidine 195) interacts with Zn(2+). Residues aspartate 197 and glutamate 200 each coordinate Ca(2+). Zn(2+) is bound at residue histidine 217. The active site involves glutamate 218. Residues histidine 221 and histidine 227 each contribute to the Zn(2+) site. Hemopexin repeat units follow at residues 276–325 (PKAC…WPFL), 326–372 (PNGL…GFPR), 374–420 (VQAI…FPGV), and 421–464 (NCRV…WLNC). Cysteines 279 and 464 form a disulfide. Aspartate 286 provides a ligand contact to Ca(2+). Ca(2+) is bound by residues aspartate 378 and aspartate 425.

The protein belongs to the peptidase M10A family. Requires Ca(2+) as cofactor. The cofactor is Zn(2+). Neutrophils. Expressed in uterus. Low levels in kidney and muscle.

The protein resides in the cytoplasmic granule. The protein localises to the secreted. It is found in the extracellular space. It localises to the extracellular matrix. The catalysed reaction is Cleavage of interstitial collagens in the triple helical domain. Unlike EC 3.4.24.7, this enzyme cleaves type III collagen more slowly than type I.. Its activity is regulated as follows. Cannot be activated without removal of the activation peptide. Activated by matrilysin. Functionally, can degrade fibrillar type I, II, and III collagens. May play a role in the degradation of collagen fibers during uterine involution. This is Neutrophil collagenase (Mmp8) from Mus musculus (Mouse).